Here is a 240-residue protein sequence, read N- to C-terminus: Purine nucleoside phosphorylase RC0672 (240 aa).

Zn(2+)-binding residues include His-60, Cys-96, and His-113.

Belongs to the purine nucleoside phosphorylase YfiH/LACC1 family. As to quaternary structure, homodimer. Cu(2+) is required as a cofactor. It depends on Zn(2+) as a cofactor.

The catalysed reaction is adenosine + phosphate = alpha-D-ribose 1-phosphate + adenine. It catalyses the reaction S-methyl-5'-thioadenosine + phosphate = 5-(methylsulfanyl)-alpha-D-ribose 1-phosphate + adenine. It carries out the reaction inosine + phosphate = alpha-D-ribose 1-phosphate + hypoxanthine. The enzyme catalyses adenosine + H2O + H(+) = inosine + NH4(+). In terms of biological role, purine nucleoside enzyme that catalyzes the phosphorolysis of adenosine and inosine nucleosides, yielding D-ribose 1-phosphate and the respective free bases, adenine and hypoxanthine. Also catalyzes the phosphorolysis of S-methyl-5'-thioadenosine into adenine and S-methyl-5-thio-alpha-D-ribose 1-phosphate. Also has adenosine deaminase activity. The polypeptide is Purine nucleoside phosphorylase RC0672 (Rickettsia conorii (strain ATCC VR-613 / Malish 7)).